A 266-amino-acid chain; its full sequence is ATP synthase subunit a (266 aa).

6 helical membrane passes run 38–58, 99–119, 126–146, 162–182, 191–211, and 224–244; these read KQML…VLAA, LLFS…IPLI, HVGG…AIGI, GVPW…NFVV, LFAT…GIEY, and SVLV…IMVL.

This sequence belongs to the ATPase A chain family. F-type ATPases have 2 components, CF(1) - the catalytic core - and CF(0) - the membrane proton channel. CF(1) has five subunits: alpha(3), beta(3), gamma(1), delta(1), epsilon(1). CF(0) has three main subunits: a(1), b(2) and c(9-12). The alpha and beta chains form an alternating ring which encloses part of the gamma chain. CF(1) is attached to CF(0) by a central stalk formed by the gamma and epsilon chains, while a peripheral stalk is formed by the delta and b chains.

The protein localises to the cell membrane. Key component of the proton channel; it plays a direct role in the translocation of protons across the membrane. This chain is ATP synthase subunit a, found in Pseudarthrobacter chlorophenolicus (strain ATCC 700700 / DSM 12829 / CIP 107037 / JCM 12360 / KCTC 9906 / NCIMB 13794 / A6) (Arthrobacter chlorophenolicus).